The chain runs to 419 residues: Thymidine phosphorylase (419 aa).

This sequence belongs to the thymidine/pyrimidine-nucleoside phosphorylase family. As to quaternary structure, homodimer.

It catalyses the reaction thymidine + phosphate = 2-deoxy-alpha-D-ribose 1-phosphate + thymine. Its function is as follows. The enzymes which catalyze the reversible phosphorolysis of pyrimidine nucleosides are involved in the degradation of these compounds and in their utilization as carbon and energy sources, or in the rescue of pyrimidine bases for nucleotide synthesis. The chain is Thymidine phosphorylase (deoA) from Mycoplasmoides pirum (Mycoplasma pirum).